The primary structure comprises 388 residues: UTP--glucose-1-phosphate uridylyltransferase (388 aa).

Residue D118 participates in Mg(2+) binding.

The protein belongs to the CugP-type UDP-glucose pyrophosphorylase family. Mg(2+) serves as cofactor.

It carries out the reaction alpha-D-glucose 1-phosphate + UTP + H(+) = UDP-alpha-D-glucose + diphosphate. Catalyzes the formation of UDP-glucose, from UTP and glucose 1-phosphate. Is highly specific since it cannot use other NTPs such as dTTP, CTP, ATP, and GTP, and other sugar-1P such as GlcNAc-1P, Gal-1P, and Man-1P, as substrates. Has probably a central and essential role as the substrate supplier for galactolipid synthesis; galactolipids are major constituents of the photosynthetic thylakoid membrane and important for photosynthetic activity. In Synechocystis sp. (strain ATCC 27184 / PCC 6803 / Kazusa), this protein is UTP--glucose-1-phosphate uridylyltransferase.